Reading from the N-terminus, the 402-residue chain is Probable sugar efflux transporter (402 aa).

12 consecutive transmembrane segments (helical) span residues 15–35, 51–71, 84–104, 109–129, 137–157, 168–188, 209–229, 245–265, 276–296, 297–317, 333–353, and 365–385; these read VLIMACAGFIFNTTEFVPVAM, GLMMTVYAWTVLIMSLPAMLA, LFIIFIVGHILLVIAWNFWIL, MCIALAHSVFWSITASLVMRI, QALGMLAIGTALATILGLPIG, VTFGIIAVLALSIMFLIIRLL, PLLLWLYVTTAIVISAHFTAY, NFATAVLLVFGFSGIAASLLF, FIVVSMSLLMFSLLLLLFSTE, AIIAMFSLVFIWGIGISCIGL, VATAIYSGIFNAGIGAGALFG, and IGYTGAALGLIGFIIFITTHL.

It belongs to the major facilitator superfamily. SotB (TC 2.A.1.2) family.

It is found in the cell inner membrane. Functionally, involved in the efflux of sugars. The physiological role may be the reduction of the intracellular concentration of toxic sugars or sugar metabolites. This is Probable sugar efflux transporter from Haemophilus influenzae (strain 86-028NP).